A 287-amino-acid polypeptide reads, in one-letter code: Protein HEXIM2 (287 aa).

2 disordered regions span residues 1-212 (MKDW…RSKE) and 266-287 (RLRQ…QPGS). The residue at position 31 (S31) is a Phosphoserine. Phosphothreonine occurs at positions 34 and 48. A phosphoserine mark is found at S53, S55, S73, S78, and S83. The span at 89–105 (ARKKHRRRPSKRKRHWR) shows a compositional bias: basic residues. The span at 115-134 (KQQRDERQSQRASRVREEMF) shows a compositional bias: basic and acidic residues. The segment at 142-145 (PYNT) is interaction with P-TEFb. 2 stretches are compositionally biased toward basic and acidic residues: residues 181–212 (GQGR…RSKE) and 266–280 (RLRQ…EGGR). Residues 208–278 (GRSKEELVRD…QENEMWNREG (71 aa)) adopt a coiled-coil conformation. The tract at residues 227–287 (QAEEEMRRLR…GGRRGGQPGS (61 aa)) is interaction with CCNT1, HEXIM1 and HEXIM2.

The protein belongs to the HEXIM family. As to quaternary structure, homooligomer and heterooligomer with HEXIM1; probably dimeric. Core component of the 7SK RNP complex, at least composed of 7SK RNA, LARP7, MEPCE, HEXIM1 (or HEXIM2) and P-TEFb (composed of CDK9 and CCNT1/cyclin-T1). Interacts with CCNT2.

The protein resides in the nucleus. Functionally, transcriptional regulator which functions as a general RNA polymerase II transcription inhibitor. Core component of the 7SK RNP complex: in cooperation with 7SK snRNA sequesters P-TEFb in a large inactive 7SK snRNP complex preventing RNA polymerase II phosphorylation and subsequent transcriptional elongation. In Bos taurus (Bovine), this protein is Protein HEXIM2 (HEXIM2).